The sequence spans 163 residues: MEPGGVGSSSCVVHQLPCTFPAQPRRQPPLLTACGWVSCSEDYIWPAWPPGFSLPGASDPAPRSAWSALPCPCRTTSSDGPSCHQGMGAPVLTVPAPLMLTNCPREPVLTVFSLEGSCRFKGHEVLKPGAQMGGHWKQELGSVVCHLLSVSSAVCPADLGQQA.

The chain is 18 kDa protein from Mus musculus (Mouse).